Reading from the N-terminus, the 194-residue chain is Transposon Tn2501 resolvase (194 aa).

Positions 3–143 (RVFAYCRVST…SGIARAKATG (141 aa)) constitute a Resolvase/invertase-type recombinase catalytic domain. Ser11 acts as the O-(5'-phospho-DNA)-serine intermediate in catalysis. A DNA-binding region (H-T-H motif) is located at residues 170–189 (ISAIAREFNTTRQTILRVKA).

This sequence belongs to the site-specific recombinase resolvase family.

Its function is as follows. Resolvase catalyzes the resolution (a site-specific recombination) of the cointegrated replicon to yield the final transposition products. The sequence is that of Transposon Tn2501 resolvase (tnpR) from Escherichia coli.